The following is a 420-amino-acid chain: Pyruvate dehydrogenase E1 component subunit alpha, mitochondrial (420 aa).

The N-terminal 33 residues, 1–33 (MLAASFKRQPSQLVRGLGAVLRTPTRIGHVRTM), are a transit peptide targeting the mitochondrion. Positions 112, 138, 139, 177, 185, 187, 216, 217, 218, 245, and 247 each coordinate pyruvate. Residues Tyr-138 and Arg-139 each contribute to the thiamine diphosphate site. Thiamine diphosphate contacts are provided by Gly-185, Val-187, Asp-216, Gly-217, Ala-218, and Asn-245. Asp-216 contributes to the Mg(2+) binding site. Positions 245 and 247 each coordinate Mg(2+). His-312 contacts thiamine diphosphate. Ser-313 carries the phosphoserine; by PDK1 and PDK2 modification.

As to quaternary structure, pyruvate dehydrogenase (E1) is a tetramer of 2 alpha and 2 beta subunits. Eukaryotic pyruvate dehydrogenase (PDH) complexes are organized as a core consisting of the oligomeric dihydrolipoamide acetyl-transferase (E2), around which are arranged multiple copies of pyruvate dehydrogenase (E1), dihydrolipoamide dehydrogenase (E3) and protein X (E3BP) bound by non-covalent bonds. Thiamine diphosphate serves as cofactor. The cofactor is Mg(2+). Phosphorylated at Ser-313 by pyruvate dehydrogenase kinases PKP1 (PDK1) and PKP2 (PDK2), and dephosphorylated by pyruvate dehydrogenase phosphatases PTC5 and PTC6.

The protein resides in the mitochondrion matrix. The enzyme catalyses N(6)-[(R)-lipoyl]-L-lysyl-[protein] + pyruvate + H(+) = N(6)-[(R)-S(8)-acetyldihydrolipoyl]-L-lysyl-[protein] + CO2. E1 activity is regulated by phosphorylation (inactivation) and dephosphorylation (activation) of the alpha subunit. Functionally, the pyruvate dehydrogenase complex catalyzes the overall conversion of pyruvate to acetyl-CoA and CO(2). In Saccharomyces cerevisiae (strain ATCC 204508 / S288c) (Baker's yeast), this protein is Pyruvate dehydrogenase E1 component subunit alpha, mitochondrial (PDA1).